Consider the following 261-residue polypeptide: 1-(5-phosphoribosyl)-5-[(5-phosphoribosylamino)methylideneamino] imidazole-4-carboxamide isomerase (261 aa).

Aspartate 15 serves as the catalytic Proton acceptor. Catalysis depends on aspartate 136, which acts as the Proton donor.

It belongs to the HisA/HisF family.

The protein localises to the cytoplasm. It catalyses the reaction 1-(5-phospho-beta-D-ribosyl)-5-[(5-phospho-beta-D-ribosylamino)methylideneamino]imidazole-4-carboxamide = 5-[(5-phospho-1-deoxy-D-ribulos-1-ylimino)methylamino]-1-(5-phospho-beta-D-ribosyl)imidazole-4-carboxamide. Its pathway is amino-acid biosynthesis; L-histidine biosynthesis; L-histidine from 5-phospho-alpha-D-ribose 1-diphosphate: step 4/9. This chain is 1-(5-phosphoribosyl)-5-[(5-phosphoribosylamino)methylideneamino] imidazole-4-carboxamide isomerase, found in Synechococcus sp. (strain JA-2-3B'a(2-13)) (Cyanobacteria bacterium Yellowstone B-Prime).